Consider the following 97-residue polypeptide: Ferredoxin-like protein YdiT (97 aa).

It belongs to the bacterial-type ferredoxin family. FixX subfamily.

Functionally, could be a 3Fe-4S cluster-containing protein. Probably participates in a redox process with YdiQ, YdiR and YdiS. This chain is Ferredoxin-like protein YdiT (ydiT), found in Escherichia coli (strain K12).